A 279-amino-acid polypeptide reads, in one-letter code: Digeranylgeranylglyceryl phosphate synthase (279 aa).

6 consecutive transmembrane segments (helical) span residues 27–47, 90–110, 127–147, 199–219, 222–242, and 259–279; these read LIAT…VALI, FVGG…IAII, VLGN…GGAF, TGIF…LPFG, WGLF…FGAF, and TSIL…AAVI.

The protein belongs to the UbiA prenyltransferase family. DGGGP synthase subfamily. It depends on Mg(2+) as a cofactor.

It is found in the cell membrane. The catalysed reaction is sn-3-O-(geranylgeranyl)glycerol 1-phosphate + (2E,6E,10E)-geranylgeranyl diphosphate = 2,3-bis-O-(geranylgeranyl)-sn-glycerol 1-phosphate + diphosphate. The protein operates within membrane lipid metabolism; glycerophospholipid metabolism. In terms of biological role, prenyltransferase that catalyzes the transfer of the geranylgeranyl moiety of geranylgeranyl diphosphate (GGPP) to the C2 hydroxyl of (S)-3-O-geranylgeranylglyceryl phosphate (GGGP). This reaction is the second ether-bond-formation step in the biosynthesis of archaeal membrane lipids. In Methanoculleus marisnigri (strain ATCC 35101 / DSM 1498 / JR1), this protein is Digeranylgeranylglyceryl phosphate synthase.